We begin with the raw amino-acid sequence, 293 residues long: N-acetylneuraminate lyase (293 aa).

Positions 47, 48, and 136 each coordinate aceneuramate. The Proton donor role is filled by Tyr136. The active-site Schiff-base intermediate with substrate is Lys164. The aceneuramate site is built by Thr166, Gly188, Asp190, Glu191, Ser207, and Tyr251.

Belongs to the DapA family. NanA subfamily. Homotetramer.

The protein localises to the cytoplasm. It carries out the reaction aceneuramate = aldehydo-N-acetyl-D-mannosamine + pyruvate. It participates in amino-sugar metabolism; N-acetylneuraminate degradation; D-fructose 6-phosphate from N-acetylneuraminate: step 1/5. Functionally, catalyzes the reversible aldol cleavage of N-acetylneuraminic acid (sialic acid; Neu5Ac) to form pyruvate and N-acetylmannosamine (ManNAc) via a Schiff base intermediate. In Pasteurella multocida (strain Pm70), this protein is N-acetylneuraminate lyase.